Here is a 552-residue protein sequence, read N- to C-terminus: MYDYIIVGAGSAGCVLANRLSADPSKRVCLLEAGPRDTNPLIHMPLGIALLSNSKKLNWAFQTAPQQHLNERSLFWPRGKTLGGSSSINAMVYIRGHEEDYQAWEQAGGEYWGWKRAFALFKKLEHNQRFDKSNYHGTDGELAVSDLKDLNPLSKSFVQAGMEAKISFNGDFNGAHQEGVGFYQVTQKHGQRWSSARAFLHDVIDRPNLDIITEAHATKVLFEDRKAVGVSYIQKNMHQQVKTTDSGEVILSLGAVNTPQLLMLSGVGAAAELKEHGIALVHDLPEVGKNLQDHLDITLMCAANSRTPIGVAFSFIPRGLVGLFSYIFKRKGFLTSNVAESGGFVKSSPERDRPNLQFHFLPTYLKDHGRKIAVGYGYTLHICDLLPKSRGRIGLKSANPMDDPLIDPNYLSDPEDIKTMIAGIKIGRAIFDAPSMAKHFKREIVPGPAVTSDDEIVADIRSRAETIYHPVGTCRMGKDPASVVDPCLQVRGLRNIRVVDASIMPNLVAGNTNAPTIMIAENAAEIIVRKVDMASLDASIGFTRQNLEPELL.

3–32 (DYIIVGAGSAGCVLANRLSADPSKRVCLLE) contacts FAD. The active-site Proton acceptor is the histidine 469.

It belongs to the GMC oxidoreductase family. It depends on FAD as a cofactor.

It is found in the cell inner membrane. The catalysed reaction is a primary alcohol + A = an aldehyde + AH2. Converts aliphatic medium-chain-length alcohols into aldehydes. May be linked to the electron transfer chain. This Pseudomonas putida (Arthrobacter siderocapsulatus) protein is Alcohol dehydrogenase [acceptor] (alkJ).